A 774-amino-acid polypeptide reads, in one-letter code: E3 ubiquitin-protein ligase RFWD3 (774 aa).

Residues Ser46 and Ser63 each carry the phosphoserine; by ATM and ATR modification. 3 disordered regions span residues 95–116 (NPRT…PASS), 139–225 (PSSS…AEYG), and 257–280 (GGKT…ASMD). The span at 106 to 116 (SDGNHTIPASS) shows a compositional bias: polar residues. Residues 150-162 (RTRRRVSASRRAR) are compositionally biased toward basic residues. A compositionally biased stretch (low complexity) spans 211 to 221 (SSSSDSDSDSS). Residues 287-331 (CTICLEQWTNAGDHRLSALRCGHLFGYRCISTWLKGQVRKCPQCN) form an RING-type; degenerate zinc finger. A coiled-coil region spans residues 361–413 (SLLKEQMLRKQAELESAQCRLQLQVLTDKCTRLQRRVQDLQKLTSHQSQNLQQ). WD repeat units follow at residues 495–537 (MHGK…QTYN), 539–577 (GRPV…SHVQ), and 583–628 (KARC…SHWP).

As to quaternary structure, interacts with MDM2 and p53/TP53. Binds to the RPA complex via direct interaction with RPA2. Interacts with RAD51. Post-translationally, phosphorylated at Ser-46 and Ser-63 upon DNA damage by ATM or ATR. ATM phosphorylation occurs at early times upon DNA damage, while ATR is the major kinase at later times. Phosphorylation by ATM and ATR is required to stabilize p53/TP53. Part of the phosphorylation depends upon RPA2 presence.

Its subcellular location is the nucleus. It localises to the PML body. The protein localises to the cytoplasm. The catalysed reaction is S-ubiquitinyl-[E2 ubiquitin-conjugating enzyme]-L-cysteine + [acceptor protein]-L-lysine = [E2 ubiquitin-conjugating enzyme]-L-cysteine + N(6)-ubiquitinyl-[acceptor protein]-L-lysine.. It functions in the pathway protein modification; protein ubiquitination. Functionally, E3 ubiquitin-protein ligase required for the repair of DNA interstrand cross-links (ICL) in response to DNA damage. Plays a key role in RPA-mediated DNA damage signaling and repair. Acts by mediating ubiquitination of the RPA complex (RPA1, RPA2 and RPA3 subunits) and RAD51 at stalled replication forks, leading to remove them from DNA damage sites and promote homologous recombination. Also mediates the ubiquitination of p53/TP53 in the late response to DNA damage, and acts as a positive regulator of p53/TP53 stability, thereby regulating the G1/S DNA damage checkpoint. May act by catalyzing the formation of short polyubiquitin chains on p53/TP53 that are not targeted to the proteasome. In response to ionizing radiation, interacts with MDM2 and enhances p53/TP53 ubiquitination, possibly by restricting MDM2 from extending polyubiquitin chains on ubiquitinated p53/TP53. Required to translesion DNA synthesis across DNA-protein cross-link adducts by catalyzing ubiquitination of proteins on single-stranded DNA (ssDNA). The protein is E3 ubiquitin-protein ligase RFWD3 of Homo sapiens (Human).